A 299-amino-acid polypeptide reads, in one-letter code: Ophiobolin family sesterterpenoid biosynthesis cluster acetyltransferase (299 aa).

Residues 1-20 (MYFFRALLSPVVLWPALVSG) form the signal peptide. 7 N-linked (GlcNAc...) asparagine glycosylation sites follow: Asn28, Asn58, Asn77, Asn126, Asn177, Asn212, and Asn282.

This sequence belongs to the bfoA family.

The protein operates within secondary metabolite biosynthesis; terpenoid biosynthesis. Acetyltransferase; part of the gene cluster that mediates the biosynthesis of an ophiobolin family sesterterpenoid. In terms of biological role, sesterterpenoid synthase; part of the gene cluster that mediates the biosynthesis of an ophiobolin family sesterterpenoid. This Aspergillus terreus protein is Ophiobolin family sesterterpenoid biosynthesis cluster acetyltransferase.